Here is a 283-residue protein sequence, read N- to C-terminus: MPTVGVVLNDDKPQALEVARRMADWLSQREVPMGIPLTRVAELVHSPSPELRDRLRQLDLIVVLGGDGTLLNTARLAAPHGIPVVGVNLGRLGFLTEVEVSDLFPALERIIAGDYRIEERMMLEARLIRDGLEQPSYFALNDVVVTKGDHPRMIRVEAAVGDEVVWTYSADGLIVSSPTGSTAYSLSAGGPIVSPELHALLLTPISPHALDARPLVIPQDQAVRLTVISSHSHAVVTVDGQPGQPMVCGDSVLVRKASVACRLIRLGERTFFRILREKMQQGR.

Residue D67 is the Proton acceptor of the active site. NAD(+) contacts are provided by residues 67–68, 141–142, R152, D171, 182–187, and Q241; these read DG, ND, and TAYSLS.

This sequence belongs to the NAD kinase family. It depends on a divalent metal cation as a cofactor.

It localises to the cytoplasm. It catalyses the reaction NAD(+) + ATP = ADP + NADP(+) + H(+). Involved in the regulation of the intracellular balance of NAD and NADP, and is a key enzyme in the biosynthesis of NADP. Catalyzes specifically the phosphorylation on 2'-hydroxyl of the adenosine moiety of NAD to yield NADP. The sequence is that of NAD kinase from Heliobacterium modesticaldum (strain ATCC 51547 / Ice1).